Here is a 466-residue protein sequence, read N- to C-terminus: Cysteine--tRNA ligase (466 aa).

A Zn(2+)-binding site is contributed by Cys-29. Residues 31–41 (PTVYDFAHIGN) carry the 'HIGH' region motif. Residues Cys-210, His-235, and Glu-239 each contribute to the Zn(2+) site. Residues 267-271 (KMSKS) carry the 'KMSKS' region motif. ATP is bound at residue Lys-270.

This sequence belongs to the class-I aminoacyl-tRNA synthetase family. As to quaternary structure, monomer. It depends on Zn(2+) as a cofactor.

It localises to the cytoplasm. It catalyses the reaction tRNA(Cys) + L-cysteine + ATP = L-cysteinyl-tRNA(Cys) + AMP + diphosphate. The polypeptide is Cysteine--tRNA ligase (Solibacter usitatus (strain Ellin6076)).